Here is a 127-residue protein sequence, read N- to C-terminus: Translation initiation factor 5A (127 aa).

Lys-35 bears the Hypusine mark.

This sequence belongs to the eIF-5A family.

The protein localises to the cytoplasm. Its function is as follows. Functions by promoting the formation of the first peptide bond. The sequence is that of Translation initiation factor 5A from Methanococcoides burtonii (strain DSM 6242 / NBRC 107633 / OCM 468 / ACE-M).